The primary structure comprises 335 residues: Matrix protein (335 aa).

This sequence belongs to the morbillivirus/respirovirus/rubulavirus M protein family.

Its subcellular location is the virion. Functionally, the M protein has a crucial role in virus assembly and interacts with the RNP complex as well as with the viral membrane. This is Matrix protein (M) from Phocine distemper virus (PDV).